An 813-amino-acid polypeptide reads, in one-letter code: Leucine--tRNA ligase (813 aa).

The 'HIGH' region motif lies at 41–51 (PYPSGTLHMGH). The 'KMSKS' region signature appears at 575-579 (KMSKS). Lys-578 contributes to the ATP binding site.

This sequence belongs to the class-I aminoacyl-tRNA synthetase family.

It localises to the cytoplasm. The enzyme catalyses tRNA(Leu) + L-leucine + ATP = L-leucyl-tRNA(Leu) + AMP + diphosphate. This Francisella tularensis subsp. tularensis (strain FSC 198) protein is Leucine--tRNA ligase.